We begin with the raw amino-acid sequence, 339 residues long: Ketol-acid reductoisomerase (NADP(+)) (339 aa).

The 182-residue stretch at 1–182 (MRVYYDRDAD…GGGRSGIIET (182 aa)) folds into the KARI N-terminal Rossmann domain. Residues 24–27 (YGSQ), Lys-48, Ser-51, Thr-53, and 83–86 (DELQ) each bind NADP(+). Residue His-108 is part of the active site. Gly-134 contributes to the NADP(+) binding site. One can recognise a KARI C-terminal knotted domain in the interval 183–328 (NFREECETDL…AKLRGMMPWI (146 aa)). Asp-191, Glu-195, Glu-227, and Glu-231 together coordinate Mg(2+). A substrate-binding site is contributed by Ser-252.

The protein belongs to the ketol-acid reductoisomerase family. Requires Mg(2+) as cofactor.

It carries out the reaction (2R)-2,3-dihydroxy-3-methylbutanoate + NADP(+) = (2S)-2-acetolactate + NADPH + H(+). The enzyme catalyses (2R,3R)-2,3-dihydroxy-3-methylpentanoate + NADP(+) = (S)-2-ethyl-2-hydroxy-3-oxobutanoate + NADPH + H(+). It functions in the pathway amino-acid biosynthesis; L-isoleucine biosynthesis; L-isoleucine from 2-oxobutanoate: step 2/4. The protein operates within amino-acid biosynthesis; L-valine biosynthesis; L-valine from pyruvate: step 2/4. In terms of biological role, involved in the biosynthesis of branched-chain amino acids (BCAA). Catalyzes an alkyl-migration followed by a ketol-acid reduction of (S)-2-acetolactate (S2AL) to yield (R)-2,3-dihydroxy-isovalerate. In the isomerase reaction, S2AL is rearranged via a Mg-dependent methyl migration to produce 3-hydroxy-3-methyl-2-ketobutyrate (HMKB). In the reductase reaction, this 2-ketoacid undergoes a metal-dependent reduction by NADPH to yield (R)-2,3-dihydroxy-isovalerate. The sequence is that of Ketol-acid reductoisomerase (NADP(+)) from Rhizobium johnstonii (strain DSM 114642 / LMG 32736 / 3841) (Rhizobium leguminosarum bv. viciae).